The following is a 293-amino-acid chain: Fructose-bisphosphate aldolase (293 aa).

S50 is a binding site for D-glyceraldehyde 3-phosphate. The Proton donor role is filled by D85. Zn(2+)-binding residues include H86, D106, E136, and H178. Residue G179 coordinates dihydroxyacetone phosphate. H208 is a Zn(2+) binding site. Residues 209 to 211 (GGS) and 230 to 233 (NVNT) contribute to the dihydroxyacetone phosphate site.

Belongs to the class II fructose-bisphosphate aldolase family. Zn(2+) is required as a cofactor.

It carries out the reaction beta-D-fructose 1,6-bisphosphate = D-glyceraldehyde 3-phosphate + dihydroxyacetone phosphate. Its pathway is carbohydrate degradation; glycolysis; D-glyceraldehyde 3-phosphate and glycerone phosphate from D-glucose: step 4/4. In terms of biological role, catalyzes the aldol condensation of dihydroxyacetone phosphate (DHAP or glycerone-phosphate) with glyceraldehyde 3-phosphate (G3P) to form fructose 1,6-bisphosphate (FBP) in gluconeogenesis and the reverse reaction in glycolysis. The sequence is that of Fructose-bisphosphate aldolase (fba) from Streptococcus pyogenes serotype M6 (strain ATCC BAA-946 / MGAS10394).